The chain runs to 158 residues: C-type lectin BfL-2 (158 aa).

An N-terminal signal peptide occupies residues 1–21 (MGHFTFIGLCLLAMFLSLSGA). Intrachain disulfides connect C26–C37, C54–C154, C61–C156, and C129–C146. Residues 33 to 155 (KNGLCYKVFS…CETLHPFICQ (123 aa)) form the C-type lectin domain. The Mannose-binding motif lies at 119–121 (EPN). The N-linked (GlcNAc...) asparagine glycan is linked to N121. Ca(2+)-binding residues include E127, N142, and D143.

It belongs to the true venom lectin family. Homodimer; non-covalently linked. In terms of tissue distribution, expressed by the venom gland.

It is found in the secreted. Mannose-binding lectin which recognizes specific carbohydrate structures and agglutinates a variety of animal cells by binding to cell-surface glycoproteins and glycolipids. May be a calcium-dependent lectin. The sequence is that of C-type lectin BfL-2 from Bungarus fasciatus (Banded krait).